Consider the following 372-residue polypeptide: 4-hydroxy-3-methylbut-2-en-1-yl diphosphate synthase (flavodoxin) (372 aa).

[4Fe-4S] cluster is bound by residues cysteine 270, cysteine 273, cysteine 305, and glutamate 312.

Belongs to the IspG family. [4Fe-4S] cluster serves as cofactor.

It catalyses the reaction (2E)-4-hydroxy-3-methylbut-2-enyl diphosphate + oxidized [flavodoxin] + H2O + 2 H(+) = 2-C-methyl-D-erythritol 2,4-cyclic diphosphate + reduced [flavodoxin]. It participates in isoprenoid biosynthesis; isopentenyl diphosphate biosynthesis via DXP pathway; isopentenyl diphosphate from 1-deoxy-D-xylulose 5-phosphate: step 5/6. Converts 2C-methyl-D-erythritol 2,4-cyclodiphosphate (ME-2,4cPP) into 1-hydroxy-2-methyl-2-(E)-butenyl 4-diphosphate. The chain is 4-hydroxy-3-methylbut-2-en-1-yl diphosphate synthase (flavodoxin) from Vibrio parahaemolyticus serotype O3:K6 (strain RIMD 2210633).